The following is a 310-amino-acid chain: Beta-carotene 3-hydroxylase 1, chloroplastic (310 aa).

A chloroplast-targeting transit peptide spans 1–51 (MAAGLSTAVTFKPLHRSFSSSSTDFRLRLPKSLSGFSPSLRFKRFSVCYVV). 2 helical membrane-spanning segments follow: residues 98-118 (YLIA…MAVY) and 132-152 (MLEM…MEFW). Residues 145 to 272 (AAVGMEFWAR…KFNGVPYGLF (128 aa)) form the Fatty acid hydroxylase domain. A Histidine box-1 motif is present at residues 157-162 (HRALWH). Positions 169-173 (HESHH) match the Histidine box-2 motif. The next 2 membrane-spanning stretches (helical) occupy residues 183 to 203 (NDVF…YGFF) and 208 to 228 (VPGL…AYMF). A Histidine box-3 motif is present at residues 230–235 (HDGLVH). Positions 256-260 (HQLHH) match the Histidine box-4 motif.

It belongs to the sterol desaturase family. Homodimer. As to expression, expressed in leaves, flowers, stems, roots and siliques.

It localises to the plastid. The protein resides in the chloroplast membrane. It carries out the reaction all-trans-beta-carotene + 4 reduced [2Fe-2S]-[ferredoxin] + 2 O2 + 4 H(+) = all-trans-zeaxanthin + 4 oxidized [2Fe-2S]-[ferredoxin] + 2 H2O. Its function is as follows. Nonheme diiron monooxygenase involved in the biosynthesis of xanthophylls. Specific for beta-ring hydroxylations of beta-carotene. Also has a low activity toward the beta- and epsilon-rings of alpha-carotene. No activity with acyclic carotenoids such as lycopene and neurosporene. Uses ferredoxin as an electron donor. This chain is Beta-carotene 3-hydroxylase 1, chloroplastic (BETA-OHASE 1), found in Arabidopsis thaliana (Mouse-ear cress).